The chain runs to 274 residues: 1D-myo-inositol 2-acetamido-2-deoxy-alpha-D-glucopyranoside deacetylase 2 (274 aa).

3 residues coordinate Zn(2+): His-6, Asp-9, and His-140.

This sequence belongs to the MshB deacetylase family. Zn(2+) serves as cofactor.

It carries out the reaction 1D-myo-inositol 2-acetamido-2-deoxy-alpha-D-glucopyranoside + H2O = 1D-myo-inositol 2-amino-2-deoxy-alpha-D-glucopyranoside + acetate. Its function is as follows. Catalyzes the deacetylation of 1D-myo-inositol 2-acetamido-2-deoxy-alpha-D-glucopyranoside (GlcNAc-Ins) in the mycothiol biosynthesis pathway. The polypeptide is 1D-myo-inositol 2-acetamido-2-deoxy-alpha-D-glucopyranoside deacetylase 2 (Saccharopolyspora erythraea (strain ATCC 11635 / DSM 40517 / JCM 4748 / NBRC 13426 / NCIMB 8594 / NRRL 2338)).